Consider the following 1052-residue polypeptide: Membrane-bound transcription factor site-1 protease (1052 aa).

The first 17 residues, 1 to 17, serve as a signal peptide directing secretion; the sequence is MKLVSTWLLVLVVLLCG. Residues 18 to 186 constitute a propeptide that is removed on maturation; sequence KRHLGDRLGT…TGRHSSRRLL (169 aa). An N-linked (GlcNAc...) asparagine glycan is attached at Asn148. Ser168 is subject to Phosphoserine. The Lumenal segment spans residues 187-999; it reads RAIPRQVAQT…MPGRYNQEVG (813 aa). One can recognise a Peptidase S8 domain in the interval 190–472; it reads PRQVAQTLQA…HGKLDLLRAY (283 aa). Asp218 (charge relay system) is an active-site residue. An N-linked (GlcNAc...) asparagine glycan is attached at Asn236. Residue His249 is the Charge relay system of the active site. Residue Asn305 is glycosylated (N-linked (GlcNAc...) asparagine). The active-site Charge relay system is Ser414. Asn515 and Asn728 each carry an N-linked (GlcNAc...) asparagine glycan. Polar residues predominate over residues 877 to 887; that stretch reads PSLSHSGNRQR. The tract at residues 877–900 is disordered; the sequence is PSLSHSGNRQRPPSGAGLAPPERM. N-linked (GlcNAc...) asparagine glycosylation is present at Asn939. The helical transmembrane segment at 1000–1022 threads the bilayer; that stretch reads QTIPVFAFLGAMVALAFFVVQIS. The Cytoplasmic segment spans residues 1023-1052; that stretch reads KAKSRPKRRRPRAKRPQLAQQAHPARTPSV. Basic residues predominate over residues 1026 to 1037; that stretch reads SRPKRRRPRAKR. Positions 1026-1052 are disordered; it reads SRPKRRRPRAKRPQLAQQAHPARTPSV.

This sequence belongs to the peptidase S8 family. Interacts with LYSET; this interaction bridges GNPTAB to MBTPS1. Ca(2+) serves as cofactor. In terms of processing, the 148 kDa zymogen is processed progressively into two membrane-bound 120 and 106 kDa forms in the endoplasmic reticulum, and late into a secreted 98 kDa form. The propeptide is autocatalytically removed through an intramolecular cleavage after Leu-186. Further cleavage generates 14, 10, and 8 kDa intermediates.

The protein resides in the endoplasmic reticulum membrane. It localises to the golgi apparatus membrane. It carries out the reaction Processes precursors containing basic and hydrophobic/aliphatic residues at P4 and P2, respectively, with a relatively relaxed acceptance of amino acids at P1 and P3.. Inhibited by divalent copper and zinc ions, but not by nickel or cobalt. Inhibited by its prosegment, but not smaller fragments. Inhibited by 4-(2-aminoethyl)benzenesulfonyl fluoride (AEBSF), a serine protease inhibitor. Functionally, serine protease that cleaves after hydrophobic or small residues, provided that Arg or Lys is in position P4: known substrates include SREBF1/SREBP1, SREBF2/SREBP2, BDNF, GNPTAB, ATF6, ATF6B and FAM20C. Cleaves substrates after Arg-Ser-Val-Leu (SREBP2), Arg-His-Leu-Leu (ATF6), Arg-Gly-Leu-Thr (BDNF) and its own propeptide after Arg-Arg-Leu-Leu. Catalyzes the first step regulated intramembrane proteolysis activation of the sterol regulatory element-binding proteins (SREBPs) SREBF1/SREBP1 and SREBF2/SREBP2. Also mediates the first step of the regulated intramembrane proteolytic activation of the cyclic AMP-dependent transcription factor ATF-6 (ATF6 and ATF6B). Mediates the protein cleavage of GNPTAB into subunit alpha and beta, thereby participating in biogenesis of lysosomes. Cleaves the propeptide from FAM20C which is required for FAM20C secretion from the Golgi apparatus membrane and for enhancement of FAM20C kinase activity, promoting osteoblast differentiation and biomineralization. Involved in the regulation of M6P-dependent Golgi-to-lysosome trafficking of lysosomal enzymes. It is required for the activation of CREB3L2/BBF2H7, a transcriptional activator of MIA3/TANGO and other genes controlling mega vesicle formation. Therefore, it plays a key role in the regulation of mega vesicle-mediated collagen trafficking. In astrocytes and osteoblasts, upon DNA damage and ER stress, mediates the first step of the regulated intramembrane proteolytic activation of the transcription factor CREB3L1, leading to the inhibition of cell-cycle progression. The chain is Membrane-bound transcription factor site-1 protease (Mbtps1) from Mus musculus (Mouse).